The chain runs to 189 residues: Der GTPase-activating protein YihI (189 aa).

The tract at residues 1–81 (MARKKKTRRV…ALAKKDPRLG (81 aa)) is disordered. Basic and acidic residues-rich tracts occupy residues 9–27 (RVSD…ELPK) and 35–46 (TRYELDAKARED). Positions 60–71 (RHSATENNNNHQ) are enriched in polar residues.

Belongs to the YihI family. In terms of assembly, interacts with Der.

A GTPase-activating protein (GAP) that modifies Der/EngA GTPase function. May play a role in ribosome biogenesis. This chain is Der GTPase-activating protein YihI, found in Pasteurella multocida (strain Pm70).